The sequence spans 209 residues: V-type ATP synthase subunit D (209 aa).

It belongs to the V-ATPase D subunit family.

In terms of biological role, produces ATP from ADP in the presence of a proton gradient across the membrane. This Chlamydia pneumoniae (Chlamydophila pneumoniae) protein is V-type ATP synthase subunit D (atpD).